The following is a 1518-amino-acid chain: Putative cellulose synthase 3 (1518 aa).

The interval 1–731 is catalytic; that stretch reads MYGTWFTTGK…EEKLEKQSFV (731 aa). 3 helical membrane passes run 24–44, 71–91, and 105–125; these read PVWVPVVLGVVLMAFVGSVRI, ITVFLMMLSLLVSLRYIVWRL, and LAVLLLLAEAYALMTLCLSYF. Residues 144–237 form a catalytic subdomain A region; that stretch reads QWPSVDVFVP…FAVIFDCDHV (94 aa). Active-site residues include aspartate 186 and aspartate 330. The tract at residues 314 to 374 is catalytic subdomain B; the sequence is EAVMGIGGFA…GQRVRWARGM (61 aa). 5 helical membrane passes run 404–424, 428–448, 465–485, 514–534, and 543–563; these read FLFAIPRLTFLVSPLAFLFLG, IAASPLAISVYALPHIFHSVI, IYETSLALFLVRITIVTLLQP, ILAGVLCAALLRGVFGIVWQF, and FILNTLWVVISLIIVLASIAV. The region spanning 569-668 is the PilZ domain; it reads QTRNAPRVSV…ERQVVSMVFG (100 aa). Residues 732 to 1518 form a cyclic di-GMP binding domain region; that stretch reads LKPVPRSARH…IARDDLTGEL (787 aa). Positions 765 to 785 are disordered; sequence APSPDQSGVTAETPFGDSNTG. The segment covering 768–785 has biased composition (polar residues); the sequence is PDQSGVTAETPFGDSNTG. The helical transmembrane segment at 1481 to 1501 threads the bilayer; that stretch reads ALYLAGLAGAGLAALGVWAWL.

In the N-terminal section; belongs to the glycosyltransferase 2 family. It in the C-terminal section; belongs to the AcsB/BcsB family.

The protein localises to the cell inner membrane. The enzyme catalyses [(1-&gt;4)-beta-D-glucosyl](n) + UDP-alpha-D-glucose = [(1-&gt;4)-beta-D-glucosyl](n+1) + UDP + H(+). It participates in glycan metabolism; bacterial cellulose biosynthesis. This is Putative cellulose synthase 3 (bcsABII-B) from Komagataeibacter xylinus (Gluconacetobacter xylinus).